Consider the following 267-residue polypeptide: Small ribosomal subunit protein eS4 (267 aa).

The 63-residue stretch at 42–104 (LPLILVLRNR…TKENFRLLFD (63 aa)) folds into the S4 RNA-binding domain.

This sequence belongs to the eukaryotic ribosomal protein eS4 family.

The protein resides in the cytoplasm. In Dictyostelium discoideum (Social amoeba), this protein is Small ribosomal subunit protein eS4 (rps4).